The following is a 385-amino-acid chain: Acetylornithine aminotransferase (385 aa).

Pyridoxal 5'-phosphate contacts are provided by residues 94–95 and phenylalanine 126; that span reads GT. Arginine 129 is a N(2)-acetyl-L-ornithine binding site. 211 to 214 contributes to the pyridoxal 5'-phosphate binding site; it reads DEVQ. Residue lysine 240 is modified to N6-(pyridoxal phosphate)lysine. A N(2)-acetyl-L-ornithine-binding site is contributed by threonine 267. Threonine 268 is a pyridoxal 5'-phosphate binding site.

Belongs to the class-III pyridoxal-phosphate-dependent aminotransferase family. ArgD subfamily. As to quaternary structure, homodimer. The cofactor is pyridoxal 5'-phosphate.

Its subcellular location is the cytoplasm. The enzyme catalyses N(2)-acetyl-L-ornithine + 2-oxoglutarate = N-acetyl-L-glutamate 5-semialdehyde + L-glutamate. It participates in amino-acid biosynthesis; L-arginine biosynthesis; N(2)-acetyl-L-ornithine from L-glutamate: step 4/4. This is Acetylornithine aminotransferase from Thermotoga maritima (strain ATCC 43589 / DSM 3109 / JCM 10099 / NBRC 100826 / MSB8).